The following is a 578-amino-acid chain: Polymerase acidic protein (578 aa).

The RNA polymerase is composed of three subunits: PB1, PB2 and PA. In terms of processing, phosphorylated on serines and threonines by host kinases.

Its function is as follows. Implicated in endonuclease cleavage of capped RNA primers. Displays an elongation factor activity in viral RNA synthesis. Dispensable for viral transcription, but not replication. The protein is Polymerase acidic protein of Infectious salmon anemia virus (isolate Atlantic salmon/Norway/810/9/99) (ISAV).